The sequence spans 142 residues: Galactose-6-phosphate isomerase subunit LacA (142 aa).

It belongs to the LacAB/RpiB family. As to quaternary structure, heteromultimeric protein consisting of LacA and LacB.

It catalyses the reaction aldehydo-D-galactose 6-phosphate = keto-D-tagatose 6-phosphate. It functions in the pathway carbohydrate metabolism; D-galactose 6-phosphate degradation; D-tagatose 6-phosphate from D-galactose 6-phosphate: step 1/1. The polypeptide is Galactose-6-phosphate isomerase subunit LacA (Staphylococcus aureus).